A 233-amino-acid polypeptide reads, in one-letter code: MADS-box transcription factor 56 (233 aa).

The MADS-box domain maps to 1–61 (MVRGRTELKR…GRLYEFASAP (61 aa)). Residues 87 to 177 (IQQVKDDTLG…RGKHRNLEAA (91 aa)) form the K-box domain.

It is found in the nucleus. Functionally, probable transcription factor. In Oryza sativa subsp. japonica (Rice), this protein is MADS-box transcription factor 56 (MADS56).